The primary structure comprises 293 residues: Acetylglutamate kinase (293 aa).

Substrate is bound by residues 70–71 (GG), R92, and N186.

It belongs to the acetylglutamate kinase family. ArgB subfamily.

The protein localises to the cytoplasm. It catalyses the reaction N-acetyl-L-glutamate + ATP = N-acetyl-L-glutamyl 5-phosphate + ADP. The protein operates within amino-acid biosynthesis; L-arginine biosynthesis; N(2)-acetyl-L-ornithine from L-glutamate: step 2/4. Its function is as follows. Catalyzes the ATP-dependent phosphorylation of N-acetyl-L-glutamate. This is Acetylglutamate kinase from Parasynechococcus marenigrum (strain WH8102).